A 187-amino-acid polypeptide reads, in one-letter code: Ribosome maturation factor RimP (187 aa).

It belongs to the RimP family.

It is found in the cytoplasm. Required for maturation of 30S ribosomal subunits. This Phenylobacterium zucineum (strain HLK1) protein is Ribosome maturation factor RimP.